We begin with the raw amino-acid sequence, 189 residues long: Elongation factor P (189 aa).

The protein belongs to the elongation factor P family.

It localises to the cytoplasm. It participates in protein biosynthesis; polypeptide chain elongation. Involved in peptide bond synthesis. Stimulates efficient translation and peptide-bond synthesis on native or reconstituted 70S ribosomes in vitro. Probably functions indirectly by altering the affinity of the ribosome for aminoacyl-tRNA, thus increasing their reactivity as acceptors for peptidyl transferase. This is Elongation factor P from Ehrlichia canis (strain Jake).